A 181-amino-acid chain; its full sequence is Small ribosomal subunit protein uS4 (181 aa).

One can recognise an S4 RNA-binding domain in the interval R104–E172.

The protein belongs to the universal ribosomal protein uS4 family. Part of the 30S ribosomal subunit. Contacts protein S5. The interaction surface between S4 and S5 is involved in control of translational fidelity.

In terms of biological role, one of the primary rRNA binding proteins, it binds directly to 16S rRNA where it nucleates assembly of the body of the 30S subunit. Functionally, with S5 and S12 plays an important role in translational accuracy. In Saccharolobus solfataricus (strain ATCC 35092 / DSM 1617 / JCM 11322 / P2) (Sulfolobus solfataricus), this protein is Small ribosomal subunit protein uS4.